The chain runs to 239 residues: Ribonuclease PH (239 aa).

Phosphate contacts are provided by residues Arg-87 and 125-127 (GTR).

This sequence belongs to the RNase PH family. As to quaternary structure, homohexameric ring arranged as a trimer of dimers.

It catalyses the reaction tRNA(n+1) + phosphate = tRNA(n) + a ribonucleoside 5'-diphosphate. Its function is as follows. Phosphorolytic 3'-5' exoribonuclease that plays an important role in tRNA 3'-end maturation. Removes nucleotide residues following the 3'-CCA terminus of tRNAs; can also add nucleotides to the ends of RNA molecules by using nucleoside diphosphates as substrates, but this may not be physiologically important. Probably plays a role in initiation of 16S rRNA degradation (leading to ribosome degradation) during starvation. In Pseudomonas paraeruginosa (strain DSM 24068 / PA7) (Pseudomonas aeruginosa (strain PA7)), this protein is Ribonuclease PH.